We begin with the raw amino-acid sequence, 401 residues long: Inositol phosphorylceramide synthase catalytic subunit AUR1 (401 aa).

Topologically, residues 1–41 (MANPFSRWFLSERPPNCHVADLETSLDPHQTLLKVQKYKPA) are cytoplasmic. Residues 42–62 (LSDWVHYIFLGSIMLFVFITN) form a helical membrane-spanning segment. Topologically, residues 63–64 (PA) are lumenal. Residues 65–85 (PWIFKILFYCFLGTLFIIPAT) form a helical membrane-spanning segment. The Cytoplasmic segment spans residues 86–87 (SQ). Residues 88–108 (FFFNALPILTWVALYFTSSYF) traverse the membrane as a helical segment. At 109–155 (PDDRRPPITVKVLPAVETILYGDNLSDILATSTNSFLDILAWLPYGL) the chain is on the lumenal side. Residue Asn-132 is glycosylated (N-linked (GlcNAc...) asparagine). A helical transmembrane segment spans residues 156–176 (FHFGAPFVVAAILFVFGPPTV). The Cytoplasmic segment spans residues 177 to 178 (LQ). The chain crosses the membrane as a helical span at residues 179-199 (GYAFAFGYMNLFGVIMQNVFP). The Lumenal portion of the chain corresponds to 200-245 (AAPPWYKILYGLQSANYDMHGSPGGLARIDKLLGINMYTTAFSNSS). A helical membrane pass occupies residues 246–266 (VIFGAFPSLHSGCATMEALFF). At 267–268 (CY) the chain is on the cytoplasmic side. The helical transmembrane segment at 269–289 (CFPKLKPLFIAYVCWLWWSTM) threads the bilayer. Over 290-291 (YL) the chain is Lumenal. The helical transmembrane segment at 292–312 (THHYFVDLMAGSVLSYVIFQY) threads the bilayer. Residues 313-401 (TKYTHLPIVD…SITSLGVKRA (89 aa)) are Cytoplasmic-facing. The interval 374–401 (VSPSLFDGSTSVSRSSATSITSLGVKRA) is disordered. The span at 382-395 (STSVSRSSATSITS) shows a compositional bias: low complexity. Phosphoserine is present on residues Ser-392 and Ser-395.

It belongs to the AUR1 family. In terms of assembly, component of the inositol phosphorylceramide synthase complex composed of at least AUR1 and KEI1.

Its subcellular location is the golgi apparatus. The protein resides in the golgi stack membrane. It catalyses the reaction an N-(2R-hydroxy-very-long-chain fatty acyl)-(R)-4-hydroxysphingoid base + a 1,2-diacyl-sn-glycero-3-phospho-(1D-myo-inositol) = a 1D-myo-inositol-1-phospho-N-[(R)-2-hydroxy-very-long-chain fatty acyl]-(R)-4-hydroxysphingoid base + a 1,2-diacyl-sn-glycerol. Its activity is regulated as follows. Inhibited by aureobasidin A (AbA), khafrefungin and rustmicin. Functionally, catalytic component of the inositol phosphorylceramide synthase which catalyzes the addition of a phosphorylinositol group onto ceramide to form inositol phosphorylceramide, an essential step in sphingolipid biosynthesis. The protein is Inositol phosphorylceramide synthase catalytic subunit AUR1 of Saccharomyces cerevisiae (strain ATCC 204508 / S288c) (Baker's yeast).